The primary structure comprises 257 residues: uncharacterized protein (257 aa).

Disordered regions lie at residues 86-119 and 182-206; these read SDEEGDNRPLPTPLVEEDNRPPTPLPEEDDRPLS and STPLGTEESRPQAKPTPTSQLTDGQ. Residues 196–206 show a composition bias toward polar residues; the sequence is PTPTSQLTDGQ.

This is an uncharacterized protein from Invertebrate iridescent virus 3 (IIV-3).